The following is a 271-amino-acid chain: DNA-directed RNA polymerase subunit Rpo3 (271 aa).

Belongs to the archaeal Rpo3/eukaryotic RPB3 RNA polymerase subunit family. In terms of assembly, part of the RNA polymerase complex.

The protein localises to the cytoplasm. It catalyses the reaction RNA(n) + a ribonucleoside 5'-triphosphate = RNA(n+1) + diphosphate. In terms of biological role, DNA-dependent RNA polymerase (RNAP) catalyzes the transcription of DNA into RNA using the four ribonucleoside triphosphates as substrates. The polypeptide is DNA-directed RNA polymerase subunit Rpo3 (Picrophilus torridus (strain ATCC 700027 / DSM 9790 / JCM 10055 / NBRC 100828 / KAW 2/3)).